A 504-amino-acid chain; its full sequence is Maturase K (504 aa).

This sequence belongs to the intron maturase 2 family. MatK subfamily.

The protein localises to the plastid. It localises to the chloroplast. Functionally, usually encoded in the trnK tRNA gene intron. Probably assists in splicing its own and other chloroplast group II introns. The polypeptide is Maturase K (Ochroma pyramidale (Balsa)).